The following is a 297-amino-acid chain: Probable endonuclease 4 (297 aa).

The interval 1-21 (MPEIGAHVSAAGGPQRAPERG) is disordered. Zn(2+)-binding residues include His67, His107, Glu145, Asp179, His182, His216, Asp229, His231, and Glu261.

The protein belongs to the AP endonuclease 2 family. Zn(2+) is required as a cofactor.

The catalysed reaction is Endonucleolytic cleavage to 5'-phosphooligonucleotide end-products.. Endonuclease IV plays a role in DNA repair. It cleaves phosphodiester bonds at apurinic or apyrimidinic (AP) sites, generating a 3'-hydroxyl group and a 5'-terminal sugar phosphate. This is Probable endonuclease 4 from Halorhodospira halophila (strain DSM 244 / SL1) (Ectothiorhodospira halophila (strain DSM 244 / SL1)).